The sequence spans 379 residues: Fructose-1,6-bisphosphate aldolase/phosphatase (379 aa).

The active-site Proton acceptor; for FBP phosphatase activity is D13. Residues D13, H20, D51, and D52 each coordinate Mg(2+). H20 contacts beta-D-fructose 1,6-bisphosphate. Residue H20 participates in dihydroxyacetone phosphate binding. Residue Y89 coordinates beta-D-fructose 1,6-bisphosphate. Q93 is a binding site for Mg(2+). 102-103 is a binding site for beta-D-fructose 1,6-bisphosphate; it reads GN. Residue D130 participates in Mg(2+) binding. K131 is a beta-D-fructose 1,6-bisphosphate binding site. Residue K131 coordinates dihydroxyacetone phosphate. The active-site Proton donor/acceptor; for FBP aldolase activity is Y227. Positions 230, 231, and 232 each coordinate Mg(2+). Residue K230 is the Schiff-base intermediate with DHAP; for FBP aldolase activity of the active site. Beta-D-fructose 1,6-bisphosphate-binding positions include 240–241, R264, D285, and Y346; that span reads QS. Dihydroxyacetone phosphate-binding residues include R264 and D285.

This sequence belongs to the FBP aldolase/phosphatase family. As to quaternary structure, homooctamer; dimer of tetramers. Mg(2+) is required as a cofactor.

It catalyses the reaction beta-D-fructose 1,6-bisphosphate + H2O = beta-D-fructose 6-phosphate + phosphate. The enzyme catalyses beta-D-fructose 1,6-bisphosphate = D-glyceraldehyde 3-phosphate + dihydroxyacetone phosphate. It participates in carbohydrate biosynthesis; gluconeogenesis. Catalyzes two subsequent steps in gluconeogenesis: the aldol condensation of dihydroxyacetone phosphate (DHAP) and glyceraldehyde-3-phosphate (GA3P) to fructose-1,6-bisphosphate (FBP), and the dephosphorylation of FBP to fructose-6-phosphate (F6P). The chain is Fructose-1,6-bisphosphate aldolase/phosphatase from Moorella thermoacetica (strain ATCC 39073 / JCM 9320).